A 271-amino-acid polypeptide reads, in one-letter code: 3-methyl-2-oxobutanoate hydroxymethyltransferase 1 (271 aa).

Mg(2+) contacts are provided by D53 and D92. 3-methyl-2-oxobutanoate contacts are provided by residues 53 to 54 (DS), D92, and K120. Position 122 (E122) interacts with Mg(2+). Residue E189 is the Proton acceptor of the active site.

It belongs to the PanB family. As to quaternary structure, homodecamer; pentamer of dimers. It depends on Mg(2+) as a cofactor.

It is found in the cytoplasm. It catalyses the reaction 3-methyl-2-oxobutanoate + (6R)-5,10-methylene-5,6,7,8-tetrahydrofolate + H2O = 2-dehydropantoate + (6S)-5,6,7,8-tetrahydrofolate. The protein operates within cofactor biosynthesis; (R)-pantothenate biosynthesis; (R)-pantoate from 3-methyl-2-oxobutanoate: step 1/2. In terms of biological role, catalyzes the reversible reaction in which hydroxymethyl group from 5,10-methylenetetrahydrofolate is transferred onto alpha-ketoisovalerate to form ketopantoate. The chain is 3-methyl-2-oxobutanoate hydroxymethyltransferase 1 from Burkholderia ambifaria (strain ATCC BAA-244 / DSM 16087 / CCUG 44356 / LMG 19182 / AMMD) (Burkholderia cepacia (strain AMMD)).